The chain runs to 270 residues: Diaminopimelate epimerase (270 aa).

Substrate-binding residues include N15, Q49, and N66. C75 acts as the Proton donor in catalysis. Substrate contacts are provided by residues 76-77 (GN), N155, N187, and 204-205 (ER). The active-site Proton acceptor is C213. 214-215 (GS) lines the substrate pocket.

Belongs to the diaminopimelate epimerase family. As to quaternary structure, homodimer.

It is found in the cytoplasm. The catalysed reaction is (2S,6S)-2,6-diaminopimelate = meso-2,6-diaminopimelate. It functions in the pathway amino-acid biosynthesis; L-lysine biosynthesis via DAP pathway; DL-2,6-diaminopimelate from LL-2,6-diaminopimelate: step 1/1. Functionally, catalyzes the stereoinversion of LL-2,6-diaminopimelate (L,L-DAP) to meso-diaminopimelate (meso-DAP), a precursor of L-lysine and an essential component of the bacterial peptidoglycan. This is Diaminopimelate epimerase from Rickettsia africae (strain ESF-5).